We begin with the raw amino-acid sequence, 425 residues long: Enolase (425 aa).

Residues 31–54 (TGSAIVPSGASTGEKEAVELRDSD) form a disordered region. Basic and acidic residues predominate over residues 43-54 (GEKEAVELRDSD). Gln162 is a (2R)-2-phosphoglycerate binding site. Glu204 (proton donor) is an active-site residue. Mg(2+)-binding residues include Asp241, Glu285, and Asp312. Residues Lys337, Arg366, Ser367, and Lys388 each coordinate (2R)-2-phosphoglycerate. The active-site Proton acceptor is the Lys337.

This sequence belongs to the enolase family. It depends on Mg(2+) as a cofactor.

The protein resides in the cytoplasm. It localises to the secreted. It is found in the cell surface. The enzyme catalyses (2R)-2-phosphoglycerate = phosphoenolpyruvate + H2O. The protein operates within carbohydrate degradation; glycolysis; pyruvate from D-glyceraldehyde 3-phosphate: step 4/5. Its function is as follows. Catalyzes the reversible conversion of 2-phosphoglycerate (2-PG) into phosphoenolpyruvate (PEP). It is essential for the degradation of carbohydrates via glycolysis. The polypeptide is Enolase (Gloeobacter violaceus (strain ATCC 29082 / PCC 7421)).